Consider the following 145-residue polypeptide: CBS domain-containing protein DDB_G0289609 (145 aa).

CBS domains are found at residues 9 to 66 (MSKS…FLPE) and 84 to 141 (MKQN…LEPV).

This is CBS domain-containing protein DDB_G0289609 from Dictyostelium discoideum (Social amoeba).